Reading from the N-terminus, the 80-residue chain is UPF0154 protein MGAS10270_Spy0296 (80 aa).

A helical membrane pass occupies residues 4–24 (AIWILLLIVALGVGVFGGIFI).

The protein belongs to the UPF0154 family.

It is found in the cell membrane. The protein is UPF0154 protein MGAS10270_Spy0296 of Streptococcus pyogenes serotype M2 (strain MGAS10270).